Reading from the N-terminus, the 245-residue chain is 2,3-bisphosphoglycerate-dependent phosphoglycerate mutase (245 aa).

Residues 8–15 (RHGQSLWN), 21–22 (TG), Arg60, 87–90 (ERHY), Lys98, 114–115 (RR), and 183–184 (GN) contribute to the substrate site. The active-site Tele-phosphohistidine intermediate is the His9. Residue Glu87 is the Proton donor/acceptor of the active site.

The protein belongs to the phosphoglycerate mutase family. BPG-dependent PGAM subfamily.

The enzyme catalyses (2R)-2-phosphoglycerate = (2R)-3-phosphoglycerate. Its pathway is carbohydrate degradation; glycolysis; pyruvate from D-glyceraldehyde 3-phosphate: step 3/5. Functionally, catalyzes the interconversion of 2-phosphoglycerate and 3-phosphoglycerate. In Bacillus cereus (strain ZK / E33L), this protein is 2,3-bisphosphoglycerate-dependent phosphoglycerate mutase.